The sequence spans 162 residues: UPF0260 protein Atu0932 (162 aa).

Belongs to the UPF0260 family.

The protein is UPF0260 protein Atu0932 of Agrobacterium fabrum (strain C58 / ATCC 33970) (Agrobacterium tumefaciens (strain C58)).